The primary structure comprises 304 residues: Nod factor export ATP-binding protein I (304 aa).

Positions 6 to 236 constitute an ABC transporter domain; that stretch reads IEFDKVKKSY…EIGCDVIEIF (231 aa). An ATP-binding site is contributed by 38–45; that stretch reads GPNGAGKT.

This sequence belongs to the ABC transporter superfamily. Lipooligosaccharide exporter (TC 3.A.1.102) family. As to quaternary structure, the complex is composed of two ATP-binding proteins (NodI) and two transmembrane proteins (NodJ).

It is found in the cell inner membrane. In terms of biological role, part of the ABC transporter complex NodIJ involved in the export of the nodulation factors (Nod factors), the bacterial signal molecules that induce symbiosis and subsequent nodulation induction. Nod factors are LCO (lipo-chitin oligosaccharide), a modified beta-1,4-linked N-acetylglucosamine oligosaccharide. This subunit is responsible for energy coupling to the transport system. This Paraburkholderia xenovorans (strain LB400) protein is Nod factor export ATP-binding protein I.